A 101-amino-acid polypeptide reads, in one-letter code: Small ribosomal subunit protein uS14A (101 aa).

This sequence belongs to the universal ribosomal protein uS14 family. As to quaternary structure, part of the 30S ribosomal subunit. Contacts proteins S3 and S10.

Binds 16S rRNA, required for the assembly of 30S particles and may also be responsible for determining the conformation of the 16S rRNA at the A site. This Salinispora arenicola (strain CNS-205) protein is Small ribosomal subunit protein uS14A.